A 426-amino-acid chain; its full sequence is Glutamate-1-semialdehyde 2,1-aminomutase (426 aa).

The residue at position 265 (lysine 265) is an N6-(pyridoxal phosphate)lysine.

The protein belongs to the class-III pyridoxal-phosphate-dependent aminotransferase family. HemL subfamily. Homodimer. Pyridoxal 5'-phosphate is required as a cofactor.

It is found in the cytoplasm. It carries out the reaction (S)-4-amino-5-oxopentanoate = 5-aminolevulinate. It functions in the pathway porphyrin-containing compound metabolism; protoporphyrin-IX biosynthesis; 5-aminolevulinate from L-glutamyl-tRNA(Glu): step 2/2. The sequence is that of Glutamate-1-semialdehyde 2,1-aminomutase (hemL) from Salmonella typhimurium (strain SL1344).